Consider the following 510-residue polypeptide: D-alanine--D-alanyl carrier protein ligase (510 aa).

157–158 (TS) is an ATP binding site. Residue aspartate 202 coordinates D-alanine. 297–302 (NTYGPT) is an ATP binding site. Position 306 (valine 306) interacts with D-alanine. Aspartate 389 and lysine 498 together coordinate ATP. Lysine 498 is a D-alanine binding site.

The protein belongs to the ATP-dependent AMP-binding enzyme family. DltA subfamily.

It localises to the cytoplasm. The enzyme catalyses holo-[D-alanyl-carrier protein] + D-alanine + ATP = D-alanyl-[D-alanyl-carrier protein] + AMP + diphosphate. Its pathway is cell wall biogenesis; lipoteichoic acid biosynthesis. Catalyzes the first step in the D-alanylation of lipoteichoic acid (LTA), the activation of D-alanine and its transfer onto the D-alanyl carrier protein (Dcp) DltC. In an ATP-dependent two-step reaction, forms a high energy D-alanyl-AMP intermediate, followed by transfer of the D-alanyl residue as a thiol ester to the phosphopantheinyl prosthetic group of the Dcp. D-alanylation of LTA plays an important role in modulating the properties of the cell wall in Gram-positive bacteria, influencing the net charge of the cell wall. This Listeria monocytogenes serovar 1/2a (strain ATCC BAA-679 / EGD-e) protein is D-alanine--D-alanyl carrier protein ligase.